The following is a 260-amino-acid chain: 3'-5' ssDNA/RNA exonuclease TatD (260 aa).

A divalent metal cation contacts are provided by Glu92, His128, and His153.

Belongs to the metallo-dependent hydrolases superfamily. TatD-type hydrolase family. TatD subfamily. In terms of assembly, monomer. Requires Mg(2+) as cofactor.

Its subcellular location is the cytoplasm. Its function is as follows. 3'-5' exonuclease that prefers single-stranded DNA and RNA. May play a role in the H(2)O(2)-induced DNA damage repair. This is 3'-5' ssDNA/RNA exonuclease TatD from Pantoea vagans (strain C9-1) (Pantoea agglomerans (strain C9-1)).